Consider the following 428-residue polypeptide: Adenylosuccinate synthetase (428 aa).

GTP is bound by residues 12–18 and 40–42; these read GDEGKGK and GHT. The Proton acceptor role is filled by Asp-13. 2 residues coordinate Mg(2+): Asp-13 and Gly-40. IMP contacts are provided by residues 13-16, 38-41, Thr-130, Arg-144, Gln-225, Thr-240, and Arg-304; these read DEGK and NAGH. Residue His-41 is the Proton donor of the active site. 300-306 serves as a coordination point for substrate; that stretch reads VTTGRAR. Residues Arg-306, 332–334, and 414–416 each bind GTP; these read KID and SVG.

This sequence belongs to the adenylosuccinate synthetase family. As to quaternary structure, homodimer. It depends on Mg(2+) as a cofactor.

It localises to the cytoplasm. It carries out the reaction IMP + L-aspartate + GTP = N(6)-(1,2-dicarboxyethyl)-AMP + GDP + phosphate + 2 H(+). It participates in purine metabolism; AMP biosynthesis via de novo pathway; AMP from IMP: step 1/2. Its function is as follows. Plays an important role in the de novo pathway of purine nucleotide biosynthesis. Catalyzes the first committed step in the biosynthesis of AMP from IMP. The polypeptide is Adenylosuccinate synthetase (Clostridium botulinum (strain 657 / Type Ba4)).